A 167-amino-acid polypeptide reads, in one-letter code: Crossover junction endodeoxyribonuclease RuvC (167 aa).

Catalysis depends on residues Asp11, Glu71, and Asp143. Asp11, Glu71, and Asp143 together coordinate Mg(2+).

This sequence belongs to the RuvC family. In terms of assembly, homodimer which binds Holliday junction (HJ) DNA. The HJ becomes 2-fold symmetrical on binding to RuvC with unstacked arms; it has a different conformation from HJ DNA in complex with RuvA. In the full resolvosome a probable DNA-RuvA(4)-RuvB(12)-RuvC(2) complex forms which resolves the HJ. The cofactor is Mg(2+).

The protein resides in the cytoplasm. It carries out the reaction Endonucleolytic cleavage at a junction such as a reciprocal single-stranded crossover between two homologous DNA duplexes (Holliday junction).. Functionally, the RuvA-RuvB-RuvC complex processes Holliday junction (HJ) DNA during genetic recombination and DNA repair. Endonuclease that resolves HJ intermediates. Cleaves cruciform DNA by making single-stranded nicks across the HJ at symmetrical positions within the homologous arms, yielding a 5'-phosphate and a 3'-hydroxyl group; requires a central core of homology in the junction. The consensus cleavage sequence is 5'-(A/T)TT(C/G)-3'. Cleavage occurs on the 3'-side of the TT dinucleotide at the point of strand exchange. HJ branch migration catalyzed by RuvA-RuvB allows RuvC to scan DNA until it finds its consensus sequence, where it cleaves and resolves the cruciform DNA. The polypeptide is Crossover junction endodeoxyribonuclease RuvC (Acidiphilium cryptum (strain JF-5)).